We begin with the raw amino-acid sequence, 332 residues long: Homeobox protein SIX3 (332 aa).

Positions 72 to 119 are interaction with TLE5; the sequence is APPEELSMFQLPTLNFSPEQVASVCETLEETGDIERLGRFLWSLPVAP. Positions 206–265 form a DNA-binding region, homeobox; the sequence is GEQKTHCFKERTRSLLREWYLQDPYPNPSKKRELAQATGLTPTQVGNWFKNRRQRDRAAA. A bind to RHO promoter region spans residues 232-234; the sequence is NPS. Disordered regions lie at residues 232–251 and 258–332; these read NPSK…TQVG and RQRD…ECDV. The span at 293–309 shows a compositional bias: low complexity; the sequence is SAESPSTAASPTTSVSS. The span at 316–332 shows a compositional bias: polar residues; the sequence is TGTSILSVTSSDSECDV.

This sequence belongs to the SIX/Sine oculis homeobox family. In terms of assembly, interacts with EYA4; translocates EYA4 from the cytoplasm to the nucleus and promotes activation of their target genes. Interacts with MTA1 and HDAC2; represses its own transcription. Interacts with MTA1; facilitates the binding of SIX3 to the core DNA motif of SIX3 promoter. Interacts with EYA1; promotes EYA1 translocation to the nucleus. Interacts with TLE1 and TLE5 (via Q domain); can act in combination with either TLE1 and/or TLE5 leading to transcriptional repression or activation, respectively. Interacts (via homeobox) with NR4A3; differentially regulates the transcriptional activities NR4A3. Interacts with GMNN. Interacts with TLE4.

The protein resides in the nucleus. Transcriptional regulator which can act as both a transcriptional repressor and activator by binding a ATTA homeodomain core recognition sequence on these target genes. During forebrain development represses WNT1 expression allowing zona limitans intrathalamica formation and thereby ensuring proper anterio-posterior patterning of the diencephalon and formation of the rostral diencephalon. Acts as a direct upstream activator of SHH expression in the rostral diencephalon ventral midline and that in turn SHH maintains its expression. In addition, Six3 activity is required for the formation of the telencephalon. During postnatal stages of brain development is necessary for ependymal cell maturation by promoting the maturation of radial glia into ependymal cells through regulation of neuroblast proliferation and migration. Acts on the proliferation and differentiation of neural progenitor cells through activating transcription of CCND1 and CCND2. During early lens formation plays a role in lens induction and specification by activating directly PAX6 in the presumptive lens ectoderm. In turn PAX6 activates SIX3 resulting in activation of PDGFRA and CCND1 promoting cell proliferation. Also is required for the neuroretina development by directly suppressing WNT8B expression in the anterior neural plate territory. Its action during retina development and lens morphogenesis is TLE5 and TLE4-dependent manner. Furthermore, during eye development regulates several genes expression. Before and during early lens development represses the CRYGF promoter by binding a SIX repressor element. Directly activates RHO transcription, or cooperates with CRX or NRL. Six3 also functions in the formation of the proximodistal axis of the optic cup, and promotes the formation of optic vesicles-like structures. During pituitary development, acts in parallel or alternatively with HESX1 to control cell proliferation through Wnt/beta-catenin pathway. Plays a role in eye development by suppressing WNT1 expression and in dorsal-ventral patterning by repressing BMP signaling pathway. The polypeptide is Homeobox protein SIX3 (SIX3) (Homo sapiens (Human)).